The sequence spans 63 residues: MKAQDLREKSVEELNAELLNLLREQFNLRMQAATGQLQQTHTLKAVRRDIARVKTVLTEKAGA.

It belongs to the universal ribosomal protein uL29 family.

This is Large ribosomal subunit protein uL29 from Vibrio campbellii (strain ATCC BAA-1116).